Consider the following 154-residue polypeptide: 6,7-dimethyl-8-ribityllumazine synthase (154 aa).

Residues W22, 56–58, and 80–82 contribute to the 5-amino-6-(D-ribitylamino)uracil site; these read AWE and CVI. 85 to 86 serves as a coordination point for (2S)-2-hydroxy-3-oxobutyl phosphate; the sequence is DT. H88 serves as the catalytic Proton donor. Residue N113 coordinates 5-amino-6-(D-ribitylamino)uracil. A (2S)-2-hydroxy-3-oxobutyl phosphate-binding site is contributed by R127.

The protein belongs to the DMRL synthase family. Forms an icosahedral capsid composed of 60 subunits, arranged as a dodecamer of pentamers.

It carries out the reaction (2S)-2-hydroxy-3-oxobutyl phosphate + 5-amino-6-(D-ribitylamino)uracil = 6,7-dimethyl-8-(1-D-ribityl)lumazine + phosphate + 2 H2O + H(+). Its pathway is cofactor biosynthesis; riboflavin biosynthesis; riboflavin from 2-hydroxy-3-oxobutyl phosphate and 5-amino-6-(D-ribitylamino)uracil: step 1/2. Catalyzes the formation of 6,7-dimethyl-8-ribityllumazine by condensation of 5-amino-6-(D-ribitylamino)uracil with 3,4-dihydroxy-2-butanone 4-phosphate. This is the penultimate step in the biosynthesis of riboflavin. This chain is 6,7-dimethyl-8-ribityllumazine synthase, found in Xanthomonas oryzae pv. oryzae (strain MAFF 311018).